A 209-amino-acid polypeptide reads, in one-letter code: Probable chalcone--flavanone isomerase 3 (209 aa).

It belongs to the chalcone isomerase family.

The catalysed reaction is a chalcone = a flavanone.. It participates in secondary metabolite biosynthesis; flavonoid biosynthesis. Its function is as follows. Involved in anthocyanin biosynthesis. In Arabidopsis thaliana (Mouse-ear cress), this protein is Probable chalcone--flavanone isomerase 3 (CHI3).